The primary structure comprises 739 residues: Mitochondrial proton/calcium exchanger protein (739 aa).

The transit peptide at methionine 1–arginine 115 directs the protein to the mitochondrion. Residues arginine 115–glutamate 136 adopt a coiled-coil conformation. Topologically, residues aspartate 116–arginine 208 are mitochondrial intermembrane. Threonine 192 carries the phosphothreonine; by PINK1 modification. A helical membrane pass occupies residues leucine 209–valine 229. Over lysine 230 to serine 739 the chain is Mitochondrial matrix. In terms of domain architecture, Letm1 RBD spans lysine 252 to glutamate 537. Coiled-coil stretches lie at residues asparagine 462–glutamate 490 and glutamate 537–glutamate 627. The residue at position 597 (lysine 597) is an N6-acetyllysine. Residues isoleucine 663–glutamate 698 form the EF-hand domain. Ca(2+) contacts are provided by aspartate 676, asparagine 678, aspartate 680, lysine 682, and aspartate 687. Positions alanine 708–serine 739 form a coiled coil. Residues glutamate 718–serine 739 form a disordered region.

The protein belongs to the LETM1 family. In terms of assembly, homohexamer. Can form 2 complexes: a major (300 kDa) and a minor complex (500-600 kDa). Interacts with BCS1L. Interacts with GHITM. Post-translationally, PINK1-mediated phosphorylation at Thr-192, positively regulates its mitochondrial calcium transport activity.

It is found in the mitochondrion inner membrane. It carries out the reaction Ca(2+)(in) + 2 H(+)(out) = Ca(2+)(out) + 2 H(+)(in). It catalyses the reaction K(+)(in) + H(+)(out) = K(+)(out) + H(+)(in). Its activity is regulated as follows. Inhibited by ruthenium red or its derivative Ru360. In terms of biological role, plays an important role in maintenance of mitochondrial morphology and in mediating either calcium or potassium/proton antiport. Mediates proton-dependent calcium efflux from mitochondrion. Also functions as an electroneutral mitochondrial proton/potassium exchanger. Crucial for the maintenance of mitochondrial tubular networks and for the assembly of the supercomplexes of the respiratory chain. Required for the maintenance of the tubular shape and cristae organization. The sequence is that of Mitochondrial proton/calcium exchanger protein from Homo sapiens (Human).